The sequence spans 224 residues: uncharacterized protein (224 aa).

This is an uncharacterized protein from Saccharomyces cerevisiae (strain ATCC 204508 / S288c) (Baker's yeast).